The primary structure comprises 164 residues: UPF0304 protein YPDSF_1971 (164 aa).

The protein belongs to the UPF0304 family.

The polypeptide is UPF0304 protein YPDSF_1971 (Yersinia pestis (strain Pestoides F)).